The primary structure comprises 205 residues: Isochorismatase domain-containing protein 2 (205 aa).

A phosphoserine mark is found at Ser-7 and Ser-202.

Belongs to the isochorismatase family. As to quaternary structure, interacts with CDKN2A.

It is found in the cytoplasm. It localises to the nucleus. The sequence is that of Isochorismatase domain-containing protein 2 (ISOC2) from Pongo abelii (Sumatran orangutan).